The sequence spans 948 residues: UvrABC system protein A (948 aa).

33–40 (GLSGSGKS) serves as a coordination point for ATP. The C4-type zinc-finger motif lies at 252 to 279 (CPICGFSIGELEPRMFSFNSPFGACPTC). ABC transporter domains lie at 309–587 (WIPT…KKSL) and 607–935 (ASDR…KYLK). Position 639–646 (639–646 (GVSGSGKS)) interacts with ATP. The C4-type zinc finger occupies 738–764 (CEACKGDGIIKIEMHFLPDVYVPCEVC).

It belongs to the ABC transporter superfamily. UvrA family. In terms of assembly, forms a heterotetramer with UvrB during the search for lesions.

It localises to the cytoplasm. Functionally, the UvrABC repair system catalyzes the recognition and processing of DNA lesions. UvrA is an ATPase and a DNA-binding protein. A damage recognition complex composed of 2 UvrA and 2 UvrB subunits scans DNA for abnormalities. When the presence of a lesion has been verified by UvrB, the UvrA molecules dissociate. This Staphylococcus aureus (strain N315) protein is UvrABC system protein A.